The following is a 204-amino-acid chain: Fluoride-specific ion channel FluC 3 (204 aa).

Positions 1-16 are enriched in basic and acidic residues; that stretch reads MRADESGPERESREPT. Positions 1-53 are disordered; sequence MRADESGPERESREPTHIPGAEPELGGEPTPRGEPGPGFEPGPGGEPAPSRAP. Positions 32–46 are enriched in pro residues; it reads RGEPGPGFEPGPGGE. A run of 4 helical transmembrane segments spans residues 62–82, 96–116, 125–145, and 158–178; these read VLAAVALGGVLGGSARYALGL, FAVNVSGAFLLALLLVYVLEI, PFAAVGFLGSFTTFSTWMVDT, and AFNVFGSLFAGLAATGLGLAI. Residues Gly133 and Thr136 each contribute to the Na(+) site.

This sequence belongs to the fluoride channel Fluc/FEX (TC 1.A.43) family.

It is found in the cell membrane. It carries out the reaction fluoride(in) = fluoride(out). Na(+) is not transported, but it plays an essential structural role and its presence is essential for fluoride channel function. In terms of biological role, fluoride-specific ion channel. Important for reducing fluoride concentration in the cell, thus reducing its toxicity. In Streptomyces avermitilis (strain ATCC 31267 / DSM 46492 / JCM 5070 / NBRC 14893 / NCIMB 12804 / NRRL 8165 / MA-4680), this protein is Fluoride-specific ion channel FluC 3.